Reading from the N-terminus, the 423-residue chain is Histidine--tRNA ligase (423 aa).

This sequence belongs to the class-II aminoacyl-tRNA synthetase family. Homodimer.

It localises to the cytoplasm. It carries out the reaction tRNA(His) + L-histidine + ATP = L-histidyl-tRNA(His) + AMP + diphosphate + H(+). In Haemophilus ducreyi (strain 35000HP / ATCC 700724), this protein is Histidine--tRNA ligase.